A 327-amino-acid polypeptide reads, in one-letter code: Embigin (327 aa).

Positions 1-32 are cleaved as a signal peptide; that stretch reads MRALPGLLEARARTPRLLLLQCLLAAARPSSA. At 33-260 the chain is on the extracellular side; the sequence is DGSAPDSPFT…ELVVLSYLVP (228 aa). Asn-54, Asn-61, Asn-75, Asn-85, Asn-100, Asn-189, Asn-196, Asn-213, and Asn-218 each carry an N-linked (GlcNAc...) asparagine glycan. Ig-like V-type domains follow at residues 71–158 and 159–253; these read PVEK…NFKV and PELH…IELV. Cystine bridges form between Cys-88/Cys-142 and Cys-180/Cys-237. Residues 261–281 traverse the membrane as a helical segment; sequence LKPFLVIVAEVILLVATILLC. Residues 282–327 are Cytoplasmic-facing; it reads EKYTQKKKKHSDEGKEFEQIEQLKSDDSNGIENNVPRHRKNESLGQ. Residues 287–327 are disordered; that stretch reads KKKKHSDEGKEFEQIEQLKSDDSNGIENNVPRHRKNESLGQ. Residues 291–308 are compositionally biased toward basic and acidic residues; the sequence is HSDEGKEFEQIEQLKSDD. A Phosphoserine modification is found at Ser-309.

Interacts with SLC16A1, SLC16A6 and SLC16A7.

It localises to the cell membrane. It is found in the synapse. Plays a role in the outgrowth of motoneurons and in the formation of neuromuscular junctions. Following muscle denervation, promotes nerve terminal sprouting and the formation of additional acetylcholine receptor clusters at synaptic sites without affecting terminal Schwann cell number or morphology. Delays the retraction of terminal sprouts following re-innervation of denervated endplates. May play a role in targeting the monocarboxylate transporters SLC16A1, SLC16A6 and SLC16A7 to the cell membrane. The sequence is that of Embigin (EMB) from Homo sapiens (Human).